We begin with the raw amino-acid sequence, 150 residues long: Large ribosomal subunit protein bL9 (150 aa).

Belongs to the bacterial ribosomal protein bL9 family.

Functionally, binds to the 23S rRNA. The protein is Large ribosomal subunit protein bL9 of Shewanella woodyi (strain ATCC 51908 / MS32).